The primary structure comprises 174 residues: Zinc finger AN1 domain-containing stress-associated protein 15 (174 aa).

The tract at residues 1–61 (MAQESCDLNK…TPPAAAAAAS (61 aa)) is disordered. Residues 18–41 (PSSSSSPSPSPTTASPSPPTAQMT) show a composition bias toward low complexity. A compositionally biased stretch (pro residues) spans 42–54 (EPPPPQSTPPTPP). The segment at 109–155 (VLFVNRCNVCRKRVGLTGFRCRCGELFCPRHRHSETHECSFDYKTAG) adopts an AN1-type zinc-finger fold. 8 residues coordinate Zn(2+): Cys-115, Cys-118, Cys-129, Cys-131, Cys-136, His-139, His-145, and Cys-147.

In terms of biological role, may be involved in environmental stress response. In Oryza sativa subsp. japonica (Rice), this protein is Zinc finger AN1 domain-containing stress-associated protein 15 (SAP15).